Consider the following 657-residue polypeptide: N-acetylgalactosaminyltransferase 7 (657 aa).

At 1-6 (MRLKIG) the chain is on the cytoplasmic side. Residues 7–29 (FILRSLLVVGSFLGLVVLWSSLT) form a helical; Signal-anchor for type II membrane protein membrane-spanning segment. At 30–657 (PRPDDPSPLS…KWEMNNIHSV (628 aa)) the chain is on the lumenal side. Residues 31–66 (RPDDPSPLSRMREDRDVNDPMPNRGGNGLAPGEDRF) form a disordered region. 5 disulfide bridges follow: Cys197/Cys435, Cys426/Cys507, Cys545/Cys562, Cys585/Cys600, and Cys625/Cys640. Positions 206 to 317 (LLTSSVVIVF…VNWYAPLVAP (112 aa)) are catalytic subdomain A. Residues Asp247 and Arg277 each contribute to the substrate site. Positions 301 and 303 each coordinate Mn(2+). Positions 381 to 443 (PYRSPAMAGG…PCSRVGHIYR (63 aa)) are catalytic subdomain B. Residue Trp412 coordinates substrate. His440 contributes to the Mn(2+) binding site. Position 443 (Arg443) interacts with substrate. Positions 532–652 (VDWGEIRGFE…SKTTQKWEMN (121 aa)) constitute a Ricin B-type lectin domain.

The protein belongs to the glycosyltransferase 2 family. GalNAc-T subfamily. Requires Mn(2+) as cofactor.

The protein localises to the golgi apparatus membrane. The catalysed reaction is L-seryl-[protein] + UDP-N-acetyl-alpha-D-galactosamine = a 3-O-[N-acetyl-alpha-D-galactosaminyl]-L-seryl-[protein] + UDP + H(+). It catalyses the reaction L-threonyl-[protein] + UDP-N-acetyl-alpha-D-galactosamine = a 3-O-[N-acetyl-alpha-D-galactosaminyl]-L-threonyl-[protein] + UDP + H(+). It participates in protein modification; protein glycosylation. Functionally, glycopeptide transferase involved in O-linked oligosaccharide biosynthesis, which catalyzes the transfer of an N-acetyl-D-galactosamine residue to an already glycosylated peptide. In contrast to other proteins of the family, it does not act as a peptide transferase that transfers GalNAc onto serine or threonine residue on the protein receptor, but instead requires the prior addition of a GalNAc on a peptide before adding additional GalNAc moieties. Some peptide transferase activity is however not excluded, considering that its appropriate peptide substrate may remain unidentified. In Pongo abelii (Sumatran orangutan), this protein is N-acetylgalactosaminyltransferase 7 (GALNT7).